Reading from the N-terminus, the 511-residue chain is ATP synthase subunit alpha (511 aa).

An ATP-binding site is contributed by 169–176; the sequence is GDRQTGKT.

Belongs to the ATPase alpha/beta chains family. As to quaternary structure, F-type ATPases have 2 components, CF(1) - the catalytic core - and CF(0) - the membrane proton channel. CF(1) has five subunits: alpha(3), beta(3), gamma(1), delta(1), epsilon(1). CF(0) has three main subunits: a(1), b(2) and c(9-12). The alpha and beta chains form an alternating ring which encloses part of the gamma chain. CF(1) is attached to CF(0) by a central stalk formed by the gamma and epsilon chains, while a peripheral stalk is formed by the delta and b chains.

It is found in the cell inner membrane. It catalyses the reaction ATP + H2O + 4 H(+)(in) = ADP + phosphate + 5 H(+)(out). In terms of biological role, produces ATP from ADP in the presence of a proton gradient across the membrane. The alpha chain is a regulatory subunit. The sequence is that of ATP synthase subunit alpha from Paracoccus denitrificans (strain Pd 1222).